A 203-amino-acid polypeptide reads, in one-letter code: Small ribosomal subunit protein uS4 (203 aa).

Residues 92-152 (LRLATVLLRA…EKSRKLVPFI (61 aa)) enclose the S4 RNA-binding domain.

This sequence belongs to the universal ribosomal protein uS4 family. As to quaternary structure, part of the 30S ribosomal subunit. Contacts protein S5. The interaction surface between S4 and S5 is involved in control of translational fidelity.

In terms of biological role, one of the primary rRNA binding proteins, it binds directly to 16S rRNA where it nucleates assembly of the body of the 30S subunit. With S5 and S12 plays an important role in translational accuracy. The protein is Small ribosomal subunit protein uS4 of Thermobifida fusca (strain YX).